The following is a 631-amino-acid chain: Pescadillo homolog (631 aa).

A BRCT domain is found at 321–414 (RLRNLFKGLK…QLLPTNKYFL (94 aa)). 2 disordered regions span residues 450 to 469 (HAQS…EDDT) and 489 to 569 (EYKK…MVKP). A phosphoserine mark is found at S453 and S457. Composition is skewed to acidic residues over residues 454-469 (DDES…EDDT) and 499-524 (VNED…EELD). The stretch at 510–541 (FDGEQESDEEEEELDEKTKRLQEEKKKMSVQS) forms a coiled coil. The span at 525 to 536 (EKTKRLQEEKKK) shows a compositional bias: basic and acidic residues. A compositionally biased stretch (basic residues) spans 543 to 552 (KVHKVNKRQL). Basic and acidic residues predominate over residues 553–562 (HKAEVDEHRL).

It belongs to the pescadillo family.

It is found in the nucleus. It localises to the nucleolus. Its subcellular location is the nucleoplasm. Required for maturation of ribosomal RNAs and formation of the large ribosomal subunit. The sequence is that of Pescadillo homolog from Drosophila mojavensis (Fruit fly).